The following is a 435-amino-acid chain: 3-ketoacyl-CoA thiolase (435 aa).

The Acyl-thioester intermediate role is filled by Cys-98. Residues His-391 and Cys-421 each act as proton acceptor in the active site.

Belongs to the thiolase-like superfamily. Thiolase family. Heterotetramer of two alpha chains (FadJ) and two beta chains (FadI).

It is found in the cytoplasm. It catalyses the reaction an acyl-CoA + acetyl-CoA = a 3-oxoacyl-CoA + CoA. It functions in the pathway lipid metabolism; fatty acid beta-oxidation. Its function is as follows. Catalyzes the final step of fatty acid oxidation in which acetyl-CoA is released and the CoA ester of a fatty acid two carbons shorter is formed. This chain is 3-ketoacyl-CoA thiolase, found in Vibrio cholerae serotype O1 (strain ATCC 39541 / Classical Ogawa 395 / O395).